The following is a 213-amino-acid chain: Octanoyltransferase (213 aa).

Positions 27–209 (AATPDEVWLC…RLLAAMPEPA (183 aa)) constitute a BPL/LPL catalytic domain. Substrate contacts are provided by residues 66–73 (RGGQVTYH), 140–142 (ALG), and 153–155 (GVA). The active-site Acyl-thioester intermediate is the C171.

It belongs to the LipB family.

Its subcellular location is the cytoplasm. The enzyme catalyses octanoyl-[ACP] + L-lysyl-[protein] = N(6)-octanoyl-L-lysyl-[protein] + holo-[ACP] + H(+). Its pathway is protein modification; protein lipoylation via endogenous pathway; protein N(6)-(lipoyl)lysine from octanoyl-[acyl-carrier-protein]: step 1/2. Catalyzes the transfer of endogenously produced octanoic acid from octanoyl-acyl-carrier-protein onto the lipoyl domains of lipoate-dependent enzymes. Lipoyl-ACP can also act as a substrate although octanoyl-ACP is likely to be the physiological substrate. This is Octanoyltransferase from Bordetella petrii (strain ATCC BAA-461 / DSM 12804 / CCUG 43448).